We begin with the raw amino-acid sequence, 143 residues long: Transcription antitermination protein NusB (143 aa).

It belongs to the NusB family.

Its function is as follows. Involved in transcription antitermination. Required for transcription of ribosomal RNA (rRNA) genes. Binds specifically to the boxA antiterminator sequence of the ribosomal RNA (rrn) operons. This Desulfatibacillum aliphaticivorans protein is Transcription antitermination protein NusB.